We begin with the raw amino-acid sequence, 292 residues long: Acetyl-coenzyme A carboxylase carboxyl transferase subunit beta (292 aa).

The 257-residue stretch at 36–292 (MWSKCEKCAK…LLRMHEVDYE (257 aa)) folds into the CoA carboxyltransferase N-terminal domain. Residues cysteine 40, cysteine 43, cysteine 59, and cysteine 62 each coordinate Zn(2+). The segment at 40 to 62 (CEKCAKILYTEDLRENFNVCPNC) adopts a C4-type zinc-finger fold.

The protein belongs to the AccD/PCCB family. In terms of assembly, acetyl-CoA carboxylase is a heterohexamer composed of biotin carboxyl carrier protein (AccB), biotin carboxylase (AccC) and two subunits each of ACCase subunit alpha (AccA) and ACCase subunit beta (AccD). Zn(2+) is required as a cofactor.

The protein localises to the cytoplasm. It catalyses the reaction N(6)-carboxybiotinyl-L-lysyl-[protein] + acetyl-CoA = N(6)-biotinyl-L-lysyl-[protein] + malonyl-CoA. It functions in the pathway lipid metabolism; malonyl-CoA biosynthesis; malonyl-CoA from acetyl-CoA: step 1/1. Its function is as follows. Component of the acetyl coenzyme A carboxylase (ACC) complex. Biotin carboxylase (BC) catalyzes the carboxylation of biotin on its carrier protein (BCCP) and then the CO(2) group is transferred by the transcarboxylase to acetyl-CoA to form malonyl-CoA. The protein is Acetyl-coenzyme A carboxylase carboxyl transferase subunit beta of Clostridium perfringens (strain 13 / Type A).